The sequence spans 119 residues: Beta-2-microglobulin (119 aa).

The signal sequence occupies residues M1–A20. Residues P25–K114 form the Ig-like C1-type domain. A disulfide bond links C45 and C100.

This sequence belongs to the beta-2-microglobulin family. Heterodimer of an alpha chain and a beta chain. Beta-2-microglobulin is the beta-chain of major histocompatibility complex class I molecules.

The protein localises to the secreted. In terms of biological role, component of the class I major histocompatibility complex (MHC). Involved in the presentation of peptide antigens to the immune system. This Papio anubis (Olive baboon) protein is Beta-2-microglobulin (B2M).